Consider the following 101-residue polypeptide: Large ribosomal subunit protein eL43 (101 aa).

Residues 40–62 form a C4-type zinc finger; it reads CPSCRSLVRLKRLAFGIWQCPKC.

The protein belongs to the eukaryotic ribosomal protein eL43 family. Zn(2+) serves as cofactor.

The sequence is that of Large ribosomal subunit protein eL43 from Pyrobaculum islandicum (strain DSM 4184 / JCM 9189 / GEO3).